We begin with the raw amino-acid sequence, 270 residues long: MLLASVPQLDRVAIQLGPFPVYWYGIIIGTGVLLGLWLATREGERLGIPKDTFVDLVLIAVPIAILFARMYYVIFEWEYYAQNPSQIINIRQGGLAIHGGLIGAVITGVLFAKRRGLSFWKLADIAAPSILLGQAIGRWGNFMNQEAHGDEVTRQFLEGLHLPDFIINQMYIEGVYYHPTFLYESLWNFAGVILLLALRKVNLRRGELFFTYLIWYSVGRFFVEGLRTDSLMLGPLRIAQVMSIGLVVISIIFIIVRRKMGQADKRYLEN.

The next 4 helical transmembrane spans lie at 19–39 (FPVYWYGIIIGTGVLLGLWLA), 56–76 (LVLIAVPIAILFARMYYVIFE), 92–112 (QGGLAIHGGLIGAVITGVLFA), and 116–136 (GLSFWKLADIAAPSILLGQAI). Arg138 serves as a coordination point for a 1,2-diacyl-sn-glycero-3-phospho-(1'-sn-glycerol). The next 3 membrane-spanning stretches (helical) occupy residues 178-198 (HPTFLYESLWNFAGVILLLAL), 206-226 (GELFFTYLIWYSVGRFFVEGL), and 236-256 (LRIAQVMSIGLVVISIIFIIV).

This sequence belongs to the Lgt family.

Its subcellular location is the cell membrane. The enzyme catalyses L-cysteinyl-[prolipoprotein] + a 1,2-diacyl-sn-glycero-3-phospho-(1'-sn-glycerol) = an S-1,2-diacyl-sn-glyceryl-L-cysteinyl-[prolipoprotein] + sn-glycerol 1-phosphate + H(+). It participates in protein modification; lipoprotein biosynthesis (diacylglyceryl transfer). In terms of biological role, catalyzes the transfer of the diacylglyceryl group from phosphatidylglycerol to the sulfhydryl group of the N-terminal cysteine of a prolipoprotein, the first step in the formation of mature lipoproteins. The sequence is that of Phosphatidylglycerol--prolipoprotein diacylglyceryl transferase from Bacillus cereus (strain ATCC 14579 / DSM 31 / CCUG 7414 / JCM 2152 / NBRC 15305 / NCIMB 9373 / NCTC 2599 / NRRL B-3711).